A 121-amino-acid chain; its full sequence is UPF0295 protein BH0952 (121 aa).

2 helical membrane passes run 12–32 (IRTF…IGIF) and 41–61 (VLAM…YFWI).

This sequence belongs to the UPF0295 family.

It localises to the cell membrane. The protein is UPF0295 protein BH0952 of Halalkalibacterium halodurans (strain ATCC BAA-125 / DSM 18197 / FERM 7344 / JCM 9153 / C-125) (Bacillus halodurans).